Reading from the N-terminus, the 45-residue chain is Monellin chain A (45 aa).

As to quaternary structure, heterodimer of an A chain and a B chain.

Functionally, taste-modifying protein; intensely sweet-tasting protein. The protein is Monellin chain A of Dioscoreophyllum cumminsii (Serendipity berry).